A 678-amino-acid polypeptide reads, in one-letter code: NADPH--cytochrome P450 reductase (678 aa).

An N-acetylglycine modification is found at Gly2. Residues 2–22 (GDSHEDTSATVPEAVAEEVSL) lie on the Lumenal side of the membrane. A helical membrane pass occupies residues 23 to 43 (FSTTDIVLFSLIVGVLTYWFI). The Cytoplasmic segment spans residues 44–678 (FKKKKEEIPE…KGRYSLDVWS (635 aa)). The Flavodoxin-like domain occupies 80-224 (IIVFYGSQTG…DFITWREQFW (145 aa)). Residues 86 to 91 (SQTGTA), 138 to 141 (ATYG), 173 to 182 (LGNKTYEHFN), and Asp208 each bind FMN. Positions 279 to 521 (KNPFLAAVTT…FVRKSQFRLP (243 aa)) constitute an FAD-binding FR-type domain. Arg298 is a binding site for NADP(+). FAD-binding positions include Arg424, 454–457 (RYYS), 472–474 (CAV), Tyr478, and 488–491 (GVAT). NADP(+) is bound by residues Thr535, 596–597 (SR), 602–606 (KVYVQ), and Asp639. Trp677 serves as a coordination point for FAD.

It belongs to the NADPH--cytochrome P450 reductase family. In the N-terminal section; belongs to the flavodoxin family. The protein in the C-terminal section; belongs to the flavoprotein pyridine nucleotide cytochrome reductase family. Requires FAD as cofactor. It depends on FMN as a cofactor.

It localises to the endoplasmic reticulum membrane. The enzyme catalyses 2 oxidized [cytochrome P450] + NADPH = 2 reduced [cytochrome P450] + NADP(+) + H(+). Functionally, this enzyme is required for electron transfer from NADP to cytochrome P450 in microsomes. It can also provide electron transfer to heme oxygenase and cytochrome B5. This Mus musculus (Mouse) protein is NADPH--cytochrome P450 reductase.